The sequence spans 487 residues: Acetyl-coenzyme A carboxylase carboxyl transferase subunit beta, chloroplastic (487 aa).

A CoA carboxyltransferase N-terminal domain is found at 223 to 487 (LWIQCDNCYG…FFPLKKNEIK (265 aa)). Positions 227, 230, 243, and 246 each coordinate Zn(2+). The segment at 227-246 (CDNCYGLMYKKVKMNVCEQC) adopts a C4-type zinc-finger fold.

Belongs to the AccD/PCCB family. As to quaternary structure, acetyl-CoA carboxylase is a heterohexamer composed of biotin carboxyl carrier protein, biotin carboxylase and 2 subunits each of ACCase subunit alpha and ACCase plastid-coded subunit beta (accD). It depends on Zn(2+) as a cofactor.

The protein resides in the plastid. The protein localises to the chloroplast stroma. It carries out the reaction N(6)-carboxybiotinyl-L-lysyl-[protein] + acetyl-CoA = N(6)-biotinyl-L-lysyl-[protein] + malonyl-CoA. It functions in the pathway lipid metabolism; malonyl-CoA biosynthesis; malonyl-CoA from acetyl-CoA: step 1/1. Component of the acetyl coenzyme A carboxylase (ACC) complex. Biotin carboxylase (BC) catalyzes the carboxylation of biotin on its carrier protein (BCCP) and then the CO(2) group is transferred by the transcarboxylase to acetyl-CoA to form malonyl-CoA. The sequence is that of Acetyl-coenzyme A carboxylase carboxyl transferase subunit beta, chloroplastic from Lepidium virginicum (Virginia pepperweed).